Here is a 392-residue protein sequence, read N- to C-terminus: S-adenosylmethionine synthase (392 aa).

ATP is bound at residue His-15. Asp-17 serves as a coordination point for Mg(2+). Glu-43 is a K(+) binding site. L-methionine contacts are provided by Glu-56 and Gln-99. Residues 99-109 are flexible loop; the sequence is QSKDIAQGVDE. ATP contacts are provided by residues 173–175, 239–240, Asp-248, 254–255, Ala-271, and Lys-275; these read DGK, KF, and RK. Asp-248 contacts L-methionine. Lys-279 is an L-methionine binding site.

The protein belongs to the AdoMet synthase family. As to quaternary structure, homotetramer; dimer of dimers. Mg(2+) is required as a cofactor. The cofactor is K(+).

The protein localises to the cytoplasm. The enzyme catalyses L-methionine + ATP + H2O = S-adenosyl-L-methionine + phosphate + diphosphate. Its pathway is amino-acid biosynthesis; S-adenosyl-L-methionine biosynthesis; S-adenosyl-L-methionine from L-methionine: step 1/1. Its function is as follows. Catalyzes the formation of S-adenosylmethionine (AdoMet) from methionine and ATP. The overall synthetic reaction is composed of two sequential steps, AdoMet formation and the subsequent tripolyphosphate hydrolysis which occurs prior to release of AdoMet from the enzyme. In Finegoldia magna (strain ATCC 29328 / DSM 20472 / WAL 2508) (Peptostreptococcus magnus), this protein is S-adenosylmethionine synthase.